Here is a 365-residue protein sequence, read N- to C-terminus: Chorismate synthase (365 aa).

NADP(+) is bound by residues Arg48 and Arg54. FMN-binding positions include Arg131–Ser133, Asn243–Ala244, Gly288, Lys303–Ser307, and Arg329.

It belongs to the chorismate synthase family. In terms of assembly, homotetramer. Requires FMNH2 as cofactor.

The catalysed reaction is 5-O-(1-carboxyvinyl)-3-phosphoshikimate = chorismate + phosphate. It functions in the pathway metabolic intermediate biosynthesis; chorismate biosynthesis; chorismate from D-erythrose 4-phosphate and phosphoenolpyruvate: step 7/7. Functionally, catalyzes the anti-1,4-elimination of the C-3 phosphate and the C-6 proR hydrogen from 5-enolpyruvylshikimate-3-phosphate (EPSP) to yield chorismate, which is the branch point compound that serves as the starting substrate for the three terminal pathways of aromatic amino acid biosynthesis. This reaction introduces a second double bond into the aromatic ring system. The polypeptide is Chorismate synthase (Rhizobium leguminosarum bv. trifolii (strain WSM2304)).